Consider the following 590-residue polypeptide: Protein OS-9 homolog (590 aa).

A signal peptide spans 1 to 19 (MRRPSLALLALSSLPFGSA). Positions 83-106 (SAIRESATANADTDNGDESIGGTS) are disordered. N136 carries N-linked (GlcNAc...) asparagine glycosylation. Residues 167-312 (NQCLHFVSGW…VIHTPRLCAD (146 aa)) form the MRH domain. C169 and C182 are disulfide-bonded. W176, W177, and Q189 together coordinate a mannooligosaccharide derivative. The tract at residues 198–248 (GGPPLRDKNSQEYILGTSLPPSSHSQKGKQIEVPNNEQKQLSPPPNTELQA) is disordered. Cystine bridges form between C265/C298 and C280/C310. A mannooligosaccharide derivative contacts are provided by D266, R272, E294, and Y300. 3 disordered regions span residues 357-376 (AAVT…PEKL), 436-472 (GDDN…MKKM), and 545-590 (YEDE…RDEL). Residues 446–455 (HHPKAGKGRK) are compositionally biased toward basic residues. Basic and acidic residues-rich tracts occupy residues 556-568 (EAGK…KKGG) and 579-590 (EGSKEEYYRDEL). Positions 587–590 (RDEL) match the Prevents secretion from ER motif.

It belongs to the OS-9 family. As to quaternary structure, interacts with missfolded ER lumenal proteins.

The protein localises to the endoplasmic reticulum membrane. In terms of biological role, lectin involved in the quality control of the secretory pathway. As a member of the endoplasmic reticulum-associated degradation lumenal (ERAD-L) surveillance system, targets misfolded endoplasmic reticulum lumenal glycoproteins for degradation. The polypeptide is Protein OS-9 homolog (yos-9) (Neurospora crassa (strain ATCC 24698 / 74-OR23-1A / CBS 708.71 / DSM 1257 / FGSC 987)).